The chain runs to 479 residues: Protein phosphatase 1B (479 aa).

Residues 1 to 14 show a composition bias toward basic and acidic residues; that stretch reads MGAFLDKPKTEKHN. The disordered stretch occupies residues 1–20; sequence MGAFLDKPKTEKHNAHGAGN. G2 is lipidated: N-myristoyl glycine. A Glycyl lysine isopeptide (Lys-Gly) (interchain with G-Cter in ISG15) cross-link involves residue K12. A PPM-type phosphatase domain is found at 23 to 295; it reads RYGLSSMQGW…DNMSIVLVCF (273 aa). 2 residues coordinate Mn(2+): D60 and G61. K142 participates in a covalent cross-link: Glycyl lysine isopeptide (Lys-Gly) (interchain with G-Cter in ISG15). D243 and D286 together coordinate Mn(2+). The residue at position 386 (S386) is a Phosphoserine. The tract at residues 423-479 is disordered; sequence VEGEESPAEPAATATSSNSDAGNPVTMQESHTESESGLAELDSSNEDAGTKMSGEKI. Residues 430-439 are compositionally biased toward low complexity; that stretch reads AEPAATATSS. The segment covering 440-451 has biased composition (polar residues); it reads NSDAGNPVTMQE.

This sequence belongs to the PP2C family. In terms of assembly, monomer. Interacts with PAK6. Interacts with the phosphorylated form of IKBKB/IKKB. Mg(2+) serves as cofactor. Requires Mn(2+) as cofactor. Isgylation negatively regulates its activity. Post-translationally, N-myristoylation is essential for the recognition of its substrates for dephosphorylation. As to expression, highly expressed in heart and skeletal muscle.

The protein localises to the cytoplasm. Its subcellular location is the cytosol. It localises to the membrane. It catalyses the reaction O-phospho-L-seryl-[protein] + H2O = L-seryl-[protein] + phosphate. The enzyme catalyses O-phospho-L-threonyl-[protein] + H2O = L-threonyl-[protein] + phosphate. Enzyme with a broad specificity. Dephosphorylates CDK2 and CDK6 in vitro. Dephosphorylates PRKAA1 and PRKAA2. Inhibits TBK1-mediated antiviral signaling by dephosphorylating it at 'Ser-172'. Plays an important role in the termination of TNF-alpha-mediated NF-kappa-B activation through dephosphorylating and inactivating IKBKB/IKKB. The polypeptide is Protein phosphatase 1B (PPM1B) (Homo sapiens (Human)).